The sequence spans 367 residues: Histidinol-phosphate aminotransferase (367 aa).

Position 222 is an N6-(pyridoxal phosphate)lysine (Lys222).

It belongs to the class-II pyridoxal-phosphate-dependent aminotransferase family. Histidinol-phosphate aminotransferase subfamily. Requires pyridoxal 5'-phosphate as cofactor.

It catalyses the reaction L-histidinol phosphate + 2-oxoglutarate = 3-(imidazol-4-yl)-2-oxopropyl phosphate + L-glutamate. It participates in amino-acid biosynthesis; L-histidine biosynthesis; L-histidine from 5-phospho-alpha-D-ribose 1-diphosphate: step 7/9. The sequence is that of Histidinol-phosphate aminotransferase from Methanosphaera stadtmanae (strain ATCC 43021 / DSM 3091 / JCM 11832 / MCB-3).